The sequence spans 365 residues: MSDLDEESQIETQIDAPIEDIIRGSELTTTTADKETLKSANELLDSLEHSHRVDLSLHLYSAYLLKRLLYKANEKKHFYEVNQFVKTQIKDNWTSWPNPNTIIDPSVDKLYEDIPEGIANVSVQPGEISNRALMHASDMMRVELDAQWQKFLSKSALDHDVTLDVDELNIPNEISRNILVKLDSLFEGLHDKIAKENEFDVRQDKHSNNIRANQIDDEPMQANRRIKYTYHDLVSRGCEMNEDMTDIYMKSLELYNDIPEKYKKRKFRLPKQILKKYHQPKKTSSYLKELLSKTREDFIPVEKLLKDKRLTSKDKSKLQRLNREETEDALNKRTFFQVKGYLEDENEISDYELDDCLIELPNGNI.

It belongs to the RRN9 family. In terms of assembly, component of the UAF (upstream activation factor) complex which consists of UAF30, RRN5, RRN9, RRN10, and histones H3 and H4. Interacts with SPT15 and RRN7.

Its subcellular location is the nucleus. The protein localises to the nucleolus. In terms of biological role, component of the UAF (upstream activation factor) complex which interacts with the upstream element of the RNA polymerase I promoter and forms a stable preinitiation complex. Together with SPT15/TBP UAF seems to stimulate basal transcription to a fully activated level. The protein is RNA polymerase I-specific transcription initiation factor RRN9 (RRN9) of Saccharomyces cerevisiae (strain ATCC 204508 / S288c) (Baker's yeast).